The chain runs to 293 residues: Light-independent protochlorophyllide reductase iron-sulfur ATP-binding protein (293 aa).

Residues G10–T15 and K39 contribute to the ATP site. S14 serves as a coordination point for Mg(2+). [4Fe-4S] cluster contacts are provided by C95 and C129. N180–R181 contributes to the ATP binding site.

The protein belongs to the NifH/BchL/ChlL family. Homodimer. Protochlorophyllide reductase is composed of three subunits; ChlL, ChlN and ChlB. Requires [4Fe-4S] cluster as cofactor.

The protein localises to the plastid. It is found in the chloroplast. The enzyme catalyses chlorophyllide a + oxidized 2[4Fe-4S]-[ferredoxin] + 2 ADP + 2 phosphate = protochlorophyllide a + reduced 2[4Fe-4S]-[ferredoxin] + 2 ATP + 2 H2O. It functions in the pathway porphyrin-containing compound metabolism; chlorophyll biosynthesis (light-independent). In terms of biological role, component of the dark-operative protochlorophyllide reductase (DPOR) that uses Mg-ATP and reduced ferredoxin to reduce ring D of protochlorophyllide (Pchlide) to form chlorophyllide a (Chlide). This reaction is light-independent. The L component serves as a unique electron donor to the NB-component of the complex, and binds Mg-ATP. This is Light-independent protochlorophyllide reductase iron-sulfur ATP-binding protein from Adiantum capillus-veneris (Maidenhair fern).